The sequence spans 109 residues: Non-structural protein of 12.7 kDa (109 aa).

Belongs to the coronaviruses ns12.7 protein family.

The sequence is that of Non-structural protein of 12.7 kDa from Sus scrofa (Pig).